Consider the following 255-residue polypeptide: tRNA (guanine-N(7)-)-methyltransferase (255 aa).

The disordered stretch occupies residues 1–37 (MTAAASDPHNPRSSADDTASPRCESGQGSFFGRRKGH). 4 residues coordinate S-adenosyl-L-methionine: glutamate 80, glutamate 105, aspartate 132, and aspartate 154. The active site involves aspartate 154. Residues lysine 158 and aspartate 190 each contribute to the substrate site.

It belongs to the class I-like SAM-binding methyltransferase superfamily. TrmB family.

The enzyme catalyses guanosine(46) in tRNA + S-adenosyl-L-methionine = N(7)-methylguanosine(46) in tRNA + S-adenosyl-L-homocysteine. The protein operates within tRNA modification; N(7)-methylguanine-tRNA biosynthesis. Catalyzes the formation of N(7)-methylguanine at position 46 (m7G46) in tRNA. The protein is tRNA (guanine-N(7)-)-methyltransferase of Nitrobacter hamburgensis (strain DSM 10229 / NCIMB 13809 / X14).